The primary structure comprises 342 residues: Nuclear hormone receptor family member nhr-150 (342 aa).

Positions 1–71 form a DNA-binding region, nuclear receptor; that stretch reads MCQVCGAAEA…AGMTSKKIQS (71 aa). The segment at 2–22 adopts an NR C4-type zinc-finger fold; it reads CQVCGAAEADLHFGGISCRAC. An NR C4-type; degenerate zinc finger spans residues 39-54; sequence CTCKTRILDSHPCRSC. The 248-residue stretch at 94 to 341 folds into the NR LBD domain; the sequence is SARIIPRSSL…GFMEIIRESK (248 aa).

The protein belongs to the nuclear hormone receptor family.

It localises to the nucleus. Orphan nuclear receptor. This Caenorhabditis elegans protein is Nuclear hormone receptor family member nhr-150 (nhr-150).